A 1001-amino-acid polypeptide reads, in one-letter code: Sarcoplasmic/endoplasmic reticulum calcium ATPase 1 (1001 aa).

Residues 1–48 (MEAAHSKSTEECLAYFGVSETTGLTPDQVKRHLEKYGHNELPAEEGKS) lie on the Cytoplasmic side of the membrane. Residues 49–69 (LWELVIEQFEDLLVRILLLAA) traverse the membrane as a helical segment. The Lumenal portion of the chain corresponds to 70 to 89 (CISFVLAWFEEGEETITAFV). A helical transmembrane segment spans residues 90 to 110 (EPFVILLILIANAIVGVWQER). Topologically, residues 111-253 (NAENAIEALK…QDKTPLQQKL (143 aa)) are cytoplasmic. A helical transmembrane segment spans residues 254-273 (DEFGEQLSKVISLICVAVWL). At 274–295 (INIGHFNDPVHGGSWIRGAIYY) the chain is on the lumenal side. A helical membrane pass occupies residues 296 to 313 (FKIAVALAVAAIPEGLPA). The Ca(2+) site is built by Val304, Ala305, Ile307, and Glu309. At 314 to 757 (VITTCLALGT…EEGRAIYNNM (444 aa)) the chain is on the cytoplasmic side. Asp351 (4-aspartylphosphate intermediate) is an active-site residue. Mg(2+) contacts are provided by Asp351 and Thr353. Thr353 provides a ligand contact to ATP. At Thr441 the chain carries Phosphothreonine. Glu442, Arg489, Lys515, and Arg560 together coordinate ATP. Thr569 is modified (phosphothreonine). At Ser581 the chain carries Phosphoserine. 5 residues coordinate ATP: Thr625, Gly626, Asp627, Arg678, and Lys684. Residue Asp703 coordinates Mg(2+). Asn706 contributes to the ATP binding site. A helical membrane pass occupies residues 758-777 (KQFIRYLISSNVGEVVCIFL). Residues Asn768 and Glu771 each contribute to the Ca(2+) site. Residues 778 to 787 (TAALGLPEAL) are Lumenal-facing. Residues 788 to 808 (IPVQLLWVNLVTDGLPATALG) traverse the membrane as a helical segment. An interaction with PLN region spans residues 788–808 (IPVQLLWVNLVTDGLPATALG). The Ca(2+) site is built by Asn796, Thr799, and Asp800. Residues 809–828 (FNPPDLDIMDRPPRSPKEPL) lie on the Cytoplasmic side of the membrane. Residues 829–851 (ISGWLFFRYMAIGGYVGAATVGA) traverse the membrane as a helical segment. The Lumenal segment spans residues 852–897 (AAWWFMYAEDGPGVTYHQLTHFMQCTEDHPHFEGLDCEIFEAPEPM). Cys876 and Cys888 are oxidised to a cystine. A helical transmembrane segment spans residues 898–917 (TMALSVLVTIEMCNALNSLS). Residue Glu908 participates in Ca(2+) binding. Over 918 to 930 (ENQSLMRMPPWVN) the chain is Cytoplasmic. Residues 931-949 (IWLLGSICLSMSLHFLILY) traverse the membrane as a helical segment. An interaction with PLN region spans residues 932–943 (WLLGSICLSMSL). Topologically, residues 950–964 (VDPLPMIFKLKALDL) are lumenal. A helical transmembrane segment spans residues 965–985 (TQWLMVLKISLPVIGLDEILK). Residues 986-1001 (FIARNYLEDPEDERRK) are Cytoplasmic-facing.

It belongs to the cation transport ATPase (P-type) (TC 3.A.3) family. Type IIA subfamily. As to quaternary structure, interacts with sarcolipin (SLN). Interacts with phospholamban (PLN). Interacts with myoregulin (MRLN). Interacts with DWORF. Interacts with VMP1. It depends on Mg(2+) as a cofactor. In terms of tissue distribution, skeletal muscle (at protein level). Skeletal muscle, fast twitch muscle (type II) fibers.

The protein localises to the endoplasmic reticulum membrane. The protein resides in the sarcoplasmic reticulum membrane. The enzyme catalyses Ca(2+)(in) + ATP + H2O = Ca(2+)(out) + ADP + phosphate + H(+). With respect to regulation, inhibited by sarcolipin (SLN) and myoregulin (MRLN). Has also been shown to be reversibly inhibited by phospholamban (PLN) at low calcium concentrations in vitro. Dephosphorylated PLN decreases the apparent affinity of the ATPase for calcium and this inhibition is regulated by the phosphorylation of PLN in vitro. Enhanced by DWORF; DWORF increases activity by displacing sarcolipin (SLN), phospholamban (PLN) and myoregulin (MRLN). Its function is as follows. Key regulator of striated muscle performance by acting as the major Ca(2+) ATPase responsible for the reuptake of cytosolic Ca(2+) into the sarcoplasmic reticulum. Catalyzes the hydrolysis of ATP coupled with the translocation of calcium from the cytosol to the sarcoplasmic reticulum lumen. Contributes to calcium sequestration involved in muscular excitation/contraction. The chain is Sarcoplasmic/endoplasmic reticulum calcium ATPase 1 (ATP2A1) from Oryctolagus cuniculus (Rabbit).